We begin with the raw amino-acid sequence, 542 residues long: Chaperonin GroEL (542 aa).

ATP-binding positions include 29–32 (TLGP), 86–90 (DGTTT), glycine 413, and aspartate 493.

This sequence belongs to the chaperonin (HSP60) family. In terms of assembly, forms a cylinder of 14 subunits composed of two heptameric rings stacked back-to-back. Interacts with the co-chaperonin GroES.

Its subcellular location is the cytoplasm. The enzyme catalyses ATP + H2O + a folded polypeptide = ADP + phosphate + an unfolded polypeptide.. In terms of biological role, together with its co-chaperonin GroES, plays an essential role in assisting protein folding. The GroEL-GroES system forms a nano-cage that allows encapsulation of the non-native substrate proteins and provides a physical environment optimized to promote and accelerate protein folding. The protein is Chaperonin GroEL of Elusimicrobium minutum (strain Pei191).